We begin with the raw amino-acid sequence, 205 residues long: Inactive ribonuclease-like protein 9 (205 aa).

Residues 1 to 26 (MMRTLITIHPLPLLLLLQQLLQPVQF) form the signal peptide. 3 cysteine pairs are disulfide-bonded: cysteine 98/cysteine 153, cysteine 116/cysteine 168, and cysteine 123/cysteine 130. Asparagine 131 and asparagine 143 each carry an N-linked (GlcNAc...) asparagine glycan.

It belongs to the pancreatic ribonuclease family.

Its subcellular location is the secreted. Its function is as follows. Does not exhibit any ribonuclease activity. This is Inactive ribonuclease-like protein 9 (RNASE9) from Gorilla gorilla gorilla (Western lowland gorilla).